Consider the following 625-residue polypeptide: Ankyrin repeat domain-containing protein oryK (625 aa).

9 ANK repeats span residues 1-27 (MDIY…DVDG), 31-60 (DGKT…GRGP), 62-89 (NPSL…NAER), 90-119 (EHRS…EYQD), 162-195 (FFDY…DVNC), 202-232 (QFET…DLTI), 500-530 (DTRC…NVNF), 534-562 (SDRT…DIDL), and 568-598 (EGRT…DFSI).

It participates in secondary metabolite biosynthesis. Its function is as follows. Ankyrin repeat domain-containing protein; part of the gene cluster that mediates the biosynthesis of oryzines, natural products with an unusual maleidride backbone. The two subunits of the fungal fatty acid synthase oryfasA and oryfasB probably form octenoic acid. This fatty acid is most likely activated by the acyl-CoA ligase oryP to give octenyl-CoA before the citrate synthase-like protein oryE catalyzes condensation with oxaloacetate to form tricarboxylic acid. The next steps of the pathways are conjectural, but a favorite possible route has been proposed, beginning with decarboxylation and concomitant dehydration by the decarboxylase oryM, followed by tautomerization, which may lead to the production of a diene intermediate. Reduction of this diene intermediate could give the known metabolite piliformic acid. On the pathway to oryzine B and oryzine A, however, hydroxylation of the diene by the alpha-ketoglutarate-dependent dioxygenase oryG and lactonisation by the lactonohydrolases oryH or oryL could give oryzine B directly. Finally, enoyl reduction by the dehydrogenase oryD would then convert oryzine B into oryzine A. This chain is Ankyrin repeat domain-containing protein oryK, found in Aspergillus oryzae (strain ATCC 42149 / RIB 40) (Yellow koji mold).